The sequence spans 34 residues: Mytilin-B (34 aa).

Cystine bridges form between C2–C27, C6–C29, C10–C31, and C15–C34.

The protein localises to the secreted. Its function is as follows. Has antibacterial and antiviral activity. In Mytilus edulis (Blue mussel), this protein is Mytilin-B.